Reading from the N-terminus, the 453-residue chain is Serine/threonine-protein phosphatase 2A 55 kDa regulatory subunit B delta isoform (453 aa).

WD repeat units follow at residues 32–71 (AEAD…KSRP), 97–138 (EIEE…KRAE), 181–219 (AHTY…RSFN), and 230–270 (ELTE…LCDR). The residue at position 285 (Ser-285) is a Phosphoserine. WD repeat units follow at residues 289–327 (EIIS…RPVE), 344–385 (ENDC…DVTL), and 420–452 (DFNK…QDKI). Tyr-305 is modified (phosphotyrosine). A Phosphothreonine modification is found at Thr-308.

Belongs to the phosphatase 2A regulatory subunit B family. As to quaternary structure, PP2A consists of a common heterodimeric core enzyme, composed of a 36 kDa catalytic subunit (subunit C) and a 65 kDa constant regulatory subunit (PR65 or subunit A), that associates with a variety of regulatory subunits. Proteins that associate with the core dimer include three families of regulatory subunits B (the R2/B/PR55/B55, R3/B''/PR72/PR130/PR59 and R5/B'/B56 families), the 48 kDa variable regulatory subunit, viral proteins, and cell signaling molecules. Interacts with ENSA (when phosphorylated at 'Ser-67') and ARPP19 (when phosphorylated at 'Ser-62'), leading to inhibit PP2A activity. Interacts with IER5.

It localises to the cytoplasm. Functionally, substrate-recognition subunit of protein phosphatase 2A (PP2A) that plays a key role in cell cycle by controlling mitosis entry and exit. Involved in chromosome clustering during late mitosis by mediating dephosphorylation of MKI67. The activity of PP2A complexes containing PPP2R2D (PR55-delta) fluctuate during the cell cycle: the activity is high in interphase and low in mitosis. The protein is Serine/threonine-protein phosphatase 2A 55 kDa regulatory subunit B delta isoform (PPP2R2D) of Homo sapiens (Human).